A 653-amino-acid polypeptide reads, in one-letter code: Brain-enriched guanylate kinase-associated protein (653 aa).

Position 186 is a phosphotyrosine (Y186). The disordered stretch occupies residues P241 to Y271. Residues S243 to S252 show a composition bias toward polar residues. Phosphoserine occurs at positions 249, 278, 295, and 314. Positions R288–G329 are disordered. A compositionally biased stretch (acidic residues) spans T315 to E327. Phosphoserine occurs at positions 400 and 427. R435 carries the post-translational modification Asymmetric dimethylarginine. 8 positions are modified to phosphoserine: S523, S533, S535, S558, S560, S564, S613, and S623. A disordered region spans residues G587–N653.

Interacts with DLG4 and DLGAP1 and forms a ternary complex.

It is found in the cytoplasm. Its subcellular location is the membrane. May sustain the structure of the postsynaptic density (PSD). In Ovis aries (Sheep), this protein is Brain-enriched guanylate kinase-associated protein (BEGAIN).